The sequence spans 459 residues: Putative flavin-containing monooxygenase 2 (459 aa).

FAD-binding positions include 17-21 (GAGVS), E38, and 46-47 (VW). An NADP(+)-binding site is contributed by 217–220 (SAID).

This sequence belongs to the FMO family. The cofactor is FAD.

This Arabidopsis thaliana (Mouse-ear cress) protein is Putative flavin-containing monooxygenase 2 (FMO2).